The chain runs to 377 residues: Probable riboflavin import permease protein RfuC (377 aa).

10 helical membrane passes run 4–24, 49–69, 72–92, 98–118, 135–155, 182–202, 223–245, 249–268, 274–294, and 303–323; these read VINSCIAVLLGVAVMSAVIVL, ALFHKAGLFVCMALGASCALK, MINLGGDGQIYAAGFVTALLL, VGFLLQWSVALLCALSVAGIL, ITSFLLSTACVPLIDALIITV, FGVPAVLTYASLVALAVGCFF, FVGFPVWATYVWGMVLSGALFGL, FSVVGLFGTCYVGFSVGMGY, ALIAHAHITVLVPLAFFFAWM, and LGAHLTVNVVLFLQAAIFLLI.

Belongs to the binding-protein-dependent transport system permease family. The complex is probably composed of two ATP-binding proteins (RfuB), two transmembrane proteins (RfuC and RfuD) and a solute-binding protein (RfuA).

Its subcellular location is the cell inner membrane. In terms of biological role, probably part of the ABC transporter complex RfuABCD involved in riboflavin import. Probably responsible for the translocation of the substrate across the membrane. The sequence is that of Probable riboflavin import permease protein RfuC from Treponema pallidum (strain Nichols).